The primary structure comprises 582 residues: MGRTRPKKLTSKASIPIVREHEIDIIDDEVQNALQQVETGVEKAEESEFHLQAAISATAQGKVNEAHIPTPETVLSNLRYDELYPPIFSQPATYIRFSSTIEDCCGCPYNMTEEDDVFFKIMNEKREPSNRITEDQFEEVMYFFEETAQTKQPFAAVDSPPVLSFAEMQDSMDATVEESVKCFAKDIYEHWKLRRIATGNRPLLPSLKFETGQDTDDTDPYVCFRRREVRQIRKTRGRDAQSADKLRRLRKELEDARQLVALVRQRELARKEMLSMERQIFLQRSEVKEMKRKLNIKDDDEDLINQKVTSIPARLPHAFANLPEQPKKKPAEAPAAQRPTAPQIRMPQKPGTQAADDMQLLEDVQAEKENEILRDIKQNIAKHIKWNEGYVDYTRAPLSPPPEKTFQAAFRPAITTQLPTPPSSDSSDNMMLESALDTANSLSFRDKLVPRTWEMNEDTCRIPSFRRRIGRGGRLMIDRRNMASRCRIEMDPLKADRFKYDREDSDDESEFECDPYDVQIMQHRAIMAAKARDQAAAAAQAHAQAQAQKRLQAEQTTTNNGPPNIGHTMGSNPGPGAVASTS.

Residues 238–295 (RDAQSADKLRRLRKELEDARQLVALVRQRELARKEMLSMERQIFLQRSEVKEMKRKLN) adopt a coiled-coil conformation. The tract at residues 323–351 (PEQPKKKPAEAPAAQRPTAPQIRMPQKPG) is disordered. A coiled-coil region spans residues 352 to 385 (TQAADDMQLLEDVQAEKENEILRDIKQNIAKHIK). The span at 539–555 (AQAHAQAQAQKRLQAEQ) shows a compositional bias: low complexity. The tract at residues 539-582 (AQAHAQAQAQKRLQAEQTTTNNGPPNIGHTMGSNPGPGAVASTS) is disordered.

Belongs to the enhancer of polycomb family. In terms of assembly, component of the NuA4 histone acetyltransferase complex.

It is found in the nucleus. Component of the NuA4 histone acetyltransferase complex which is involved in transcriptional activation of selected genes principally by acetylation of nucleosomal histone H4 and H2A. The NuA4 complex is also involved in DNA repair. Involved in gene silencing by neighboring heterochromatin, blockage of the silencing spreading along the chromosome, and required for cell cycle progression through G2/M. This Aspergillus fumigatus (strain ATCC MYA-4609 / CBS 101355 / FGSC A1100 / Af293) (Neosartorya fumigata) protein is Enhancer of polycomb-like protein 1 (epl1).